A 91-amino-acid chain; its full sequence is uncharacterized protein (91 aa).

A run of 3 helical transmembrane segments spans residues 6–26, 37–57, and 68–88; these read AAAVFSITIPIISAILIINFF, MPVFFPLLLSPIGIILAFVSI, and IVLNAIMFPFPFFWFIGGALL.

The protein resides in the cell membrane. This is an uncharacterized protein from Bacillus subtilis (strain 168).